We begin with the raw amino-acid sequence, 457 residues long: Siroheme synthase (457 aa).

The segment at 1 to 204 (MDHLPIFCQL…ADAKAVSEIT (204 aa)) is precorrin-2 dehydrogenase /sirohydrochlorin ferrochelatase. NAD(+)-binding positions include 22–23 (DV) and 43–44 (LA). Serine 128 is modified (phosphoserine). Residues 216 to 457 (GEVVLVGAGP…RDKLNWFSNH (242 aa)) are uroporphyrinogen-III C-methyltransferase. An S-adenosyl-L-methionine-binding site is contributed by proline 225. The active-site Proton acceptor is the aspartate 248. Lysine 270 serves as the catalytic Proton donor. S-adenosyl-L-methionine-binding positions include 301–303 (GGD), isoleucine 306, 331–332 (TA), methionine 382, and glycine 411.

It in the N-terminal section; belongs to the precorrin-2 dehydrogenase / sirohydrochlorin ferrochelatase family. In the C-terminal section; belongs to the precorrin methyltransferase family.

The enzyme catalyses uroporphyrinogen III + 2 S-adenosyl-L-methionine = precorrin-2 + 2 S-adenosyl-L-homocysteine + H(+). The catalysed reaction is precorrin-2 + NAD(+) = sirohydrochlorin + NADH + 2 H(+). It catalyses the reaction siroheme + 2 H(+) = sirohydrochlorin + Fe(2+). It functions in the pathway cofactor biosynthesis; adenosylcobalamin biosynthesis; precorrin-2 from uroporphyrinogen III: step 1/1. The protein operates within cofactor biosynthesis; adenosylcobalamin biosynthesis; sirohydrochlorin from precorrin-2: step 1/1. It participates in porphyrin-containing compound metabolism; siroheme biosynthesis; precorrin-2 from uroporphyrinogen III: step 1/1. Its pathway is porphyrin-containing compound metabolism; siroheme biosynthesis; siroheme from sirohydrochlorin: step 1/1. It functions in the pathway porphyrin-containing compound metabolism; siroheme biosynthesis; sirohydrochlorin from precorrin-2: step 1/1. In terms of biological role, multifunctional enzyme that catalyzes the SAM-dependent methylations of uroporphyrinogen III at position C-2 and C-7 to form precorrin-2 via precorrin-1. Then it catalyzes the NAD-dependent ring dehydrogenation of precorrin-2 to yield sirohydrochlorin. Finally, it catalyzes the ferrochelation of sirohydrochlorin to yield siroheme. The sequence is that of Siroheme synthase from Citrobacter koseri (strain ATCC BAA-895 / CDC 4225-83 / SGSC4696).